The following is a 307-amino-acid chain: Glutaminase (307 aa).

7 residues coordinate substrate: serine 66, asparagine 116, glutamate 160, asparagine 167, tyrosine 191, tyrosine 243, and valine 261.

This sequence belongs to the glutaminase family. Homotetramer.

It catalyses the reaction L-glutamine + H2O = L-glutamate + NH4(+). This chain is Glutaminase, found in Pseudoalteromonas translucida (strain TAC 125).